Here is a 243-residue protein sequence, read N- to C-terminus: 1-(5-phosphoribosyl)-5-[(5-phosphoribosylamino)methylideneamino] imidazole-4-carboxamide isomerase (243 aa).

D8 functions as the Proton acceptor in the catalytic mechanism. The Proton donor role is filled by D129.

The protein belongs to the HisA/HisF family.

The protein resides in the cytoplasm. It catalyses the reaction 1-(5-phospho-beta-D-ribosyl)-5-[(5-phospho-beta-D-ribosylamino)methylideneamino]imidazole-4-carboxamide = 5-[(5-phospho-1-deoxy-D-ribulos-1-ylimino)methylamino]-1-(5-phospho-beta-D-ribosyl)imidazole-4-carboxamide. It functions in the pathway amino-acid biosynthesis; L-histidine biosynthesis; L-histidine from 5-phospho-alpha-D-ribose 1-diphosphate: step 4/9. This Brucella suis biovar 1 (strain 1330) protein is 1-(5-phosphoribosyl)-5-[(5-phosphoribosylamino)methylideneamino] imidazole-4-carboxamide isomerase.